We begin with the raw amino-acid sequence, 83 residues long: MSGSTGERSFADIITSIRYWIIHSITIPSLFIAGWLFVSTGLAYDVFGSPRPNEYFTESRQGIPLITGRFDPLEQLDEFSRSF.

A helical membrane pass occupies residues 21-35 (IIHSITIPSLFIAGW). Histidine 23 is a heme binding site.

The protein belongs to the PsbE/PsbF family. In terms of assembly, heterodimer of an alpha subunit and a beta subunit. PSII is composed of 1 copy each of membrane proteins PsbA, PsbB, PsbC, PsbD, PsbE, PsbF, PsbH, PsbI, PsbJ, PsbK, PsbL, PsbM, PsbT, PsbX, PsbY, PsbZ, Psb30/Ycf12, at least 3 peripheral proteins of the oxygen-evolving complex and a large number of cofactors. It forms dimeric complexes. It depends on heme b as a cofactor.

It localises to the plastid. Its subcellular location is the chloroplast thylakoid membrane. Its function is as follows. This b-type cytochrome is tightly associated with the reaction center of photosystem II (PSII). PSII is a light-driven water:plastoquinone oxidoreductase that uses light energy to abstract electrons from H(2)O, generating O(2) and a proton gradient subsequently used for ATP formation. It consists of a core antenna complex that captures photons, and an electron transfer chain that converts photonic excitation into a charge separation. This is Cytochrome b559 subunit alpha from Lotus japonicus (Lotus corniculatus var. japonicus).